The primary structure comprises 1027 residues: A-factor-processing enzyme (1027 aa).

A Zn(2+)-binding site is contributed by H118. Residue E121 is the Proton acceptor of the active site. H122 and E199 together coordinate Zn(2+).

The protein belongs to the peptidase M16 family. The cofactor is Zn(2+).

The protein resides in the membrane. Its activity is regulated as follows. Inhibited by chelating agents like EDTA, TPEN and 1,1-phenanthroline, as well as NEM, free cysteine and DTT. Its function is as follows. Involved in the N-terminal endoproteolytic cleavage of the P2 precursor of the a-factor mating pheromone. Capable of proteolysing the established mammalian insulin-degrading enzymes (IDEs) substrates amyloid-beta peptide and insulin B-chain. This chain is A-factor-processing enzyme (STE23), found in Saccharomyces cerevisiae (strain ATCC 204508 / S288c) (Baker's yeast).